A 214-amino-acid chain; its full sequence is Redox-sensing transcriptional repressor Rex (214 aa).

The segment at residues 17–56 is a DNA-binding region (H-T-H motif); the sequence is LYYRIFKRFYADQVEKASSKQIADAMGIDSATVRRDFSYF. Position 91-96 (91-96) interacts with NAD(+); the sequence is GCGNIG.

Belongs to the transcriptional regulatory Rex family. As to quaternary structure, homodimer.

Its subcellular location is the cytoplasm. Its function is as follows. Modulates transcription in response to changes in cellular NADH/NAD(+) redox state. This is Redox-sensing transcriptional repressor Rex from Streptococcus equi subsp. zooepidemicus (strain H70).